Reading from the N-terminus, the 307-residue chain is Membrane protein insertase YidC 2 (307 aa).

An N-terminal signal peptide occupies residues 1-23 (MKLTLNRILFSGLALSILFTLTG). The N-palmitoyl cysteine moiety is linked to residue Cys-24. Cys-24 carries the S-diacylglycerol cysteine lipid modification. 5 helical membrane passes run 58 to 78 (LGYG…ILPL), 135 to 155 (LGGI…AMYF), 179 to 199 (VLTA…MMAV), 209 to 225 (TMMY…SFSL), and 231 to 251 (LYWL…TYLL). The interval 263 to 307 (YAKTPPKAYQSTSSRKDVTPSQNMEQANLPKKIKSNRNAGKQRKR) is disordered. A compositionally biased stretch (polar residues) spans 271–288 (YQSTSSRKDVTPSQNMEQ). The span at 293-307 (KKIKSNRNAGKQRKR) shows a compositional bias: basic residues.

The protein belongs to the OXA1/ALB3/YidC family. Type 2 subfamily.

Its subcellular location is the cell membrane. Functionally, required for the insertion and/or proper folding and/or complex formation of integral membrane proteins into the membrane. Involved in integration of membrane proteins that insert both dependently and independently of the Sec translocase complex, as well as at least some lipoproteins. The protein is Membrane protein insertase YidC 2 of Streptococcus pyogenes serotype M18 (strain MGAS8232).